Here is a 299-residue protein sequence, read N- to C-terminus: Probable alpha-L-glutamate ligase 2 (299 aa).

An ATP-grasp domain is found at 104-287; that stretch reads MQLMSRRGIG…VAGAIIEFVE (184 aa). ATP contacts are provided by residues Lys-141, 178–179, Asp-187, and 211–213; these read EY and RSN. Residues Asp-248, Glu-260, and Asn-262 each coordinate Mg(2+). The Mn(2+) site is built by Asp-248, Glu-260, and Asn-262.

It belongs to the RimK family. It depends on Mg(2+) as a cofactor. Mn(2+) is required as a cofactor.

This is Probable alpha-L-glutamate ligase 2 from Shewanella sp. (strain MR-4).